A 287-amino-acid chain; its full sequence is 4-hydroxybenzoate octaprenyltransferase (287 aa).

A run of 6 helical transmembrane segments spans residues 41-61 (WPLL…GCAM), 89-109 (WEAI…ILPL), 133-153 (FFAI…PMAF), 158-178 (DTVP…SVAY), 202-224 (FGRF…YVWI), and 267-287 (NNWL…LAGS).

This sequence belongs to the UbiA prenyltransferase family. It depends on Mg(2+) as a cofactor.

It localises to the cell inner membrane. It catalyses the reaction all-trans-octaprenyl diphosphate + 4-hydroxybenzoate = 4-hydroxy-3-(all-trans-octaprenyl)benzoate + diphosphate. Its pathway is cofactor biosynthesis; ubiquinone biosynthesis. Catalyzes the prenylation of para-hydroxybenzoate (PHB) with an all-trans polyprenyl group. Mediates the second step in the final reaction sequence of ubiquinone-8 (UQ-8) biosynthesis, which is the condensation of the polyisoprenoid side chain with PHB, generating the first membrane-bound Q intermediate 3-octaprenyl-4-hydroxybenzoate. In Burkholderia lata (strain ATCC 17760 / DSM 23089 / LMG 22485 / NCIMB 9086 / R18194 / 383), this protein is 4-hydroxybenzoate octaprenyltransferase.